The following is a 207-amino-acid chain: Nodulation protein S (207 aa).

The protein belongs to the NodS family.

Its function is as follows. SAM-utilizing methyltransferase involved in nod factor synthesis. This is Nodulation protein S (nodS) from Azorhizobium caulinodans (strain ATCC 43989 / DSM 5975 / JCM 20966 / LMG 6465 / NBRC 14845 / NCIMB 13405 / ORS 571).